A 173-amino-acid polypeptide reads, in one-letter code: Putative MgpC-like protein MPN_092 (173 aa).

It belongs to the MgpC family.

In Mycoplasma pneumoniae (strain ATCC 29342 / M129 / Subtype 1) (Mycoplasmoides pneumoniae), this protein is Putative MgpC-like protein MPN_092.